Here is a 272-residue protein sequence, read N- to C-terminus: Shikimate dehydrogenase (NADP(+)) (272 aa).

Residues 14-16 and T61 each bind shikimate; that span reads SKS. The Proton acceptor role is filled by K65. Residue E77 participates in NADP(+) binding. Shikimate-binding residues include N86 and D102. NADP(+) is bound by residues 126-130, 149-154, and M213; these read GAGGA and NRTVSR. Position 215 (Y215) interacts with shikimate. G237 provides a ligand contact to NADP(+).

The protein belongs to the shikimate dehydrogenase family. As to quaternary structure, homodimer.

It catalyses the reaction shikimate + NADP(+) = 3-dehydroshikimate + NADPH + H(+). Its pathway is metabolic intermediate biosynthesis; chorismate biosynthesis; chorismate from D-erythrose 4-phosphate and phosphoenolpyruvate: step 4/7. Involved in the biosynthesis of the chorismate, which leads to the biosynthesis of aromatic amino acids. Catalyzes the reversible NADPH linked reduction of 3-dehydroshikimate (DHSA) to yield shikimate (SA). The sequence is that of Shikimate dehydrogenase (NADP(+)) from Escherichia coli O45:K1 (strain S88 / ExPEC).